Reading from the N-terminus, the 521-residue chain is uncharacterized protein (521 aa).

The next 10 helical transmembrane spans lie at 103-123, 136-156, 177-197, 200-220, 259-279, 299-319, 327-346, 358-378, 411-431, and 450-470; these read NLML…VPMP, FWFF…LWIT, YILF…FTAW, ITFT…GISF, AYAH…VYIV, IMYV…SSWI, YALV…VYVR, FVLV…LITM, CVAS…LHFG, and FKLT…ASYL.

The protein localises to the membrane. This is an uncharacterized protein from Schizosaccharomyces pombe (strain 972 / ATCC 24843) (Fission yeast).